We begin with the raw amino-acid sequence, 384 residues long: Outer membrane protein assembly factor BamB (384 aa).

The N-terminal stretch at 1 to 21 (MKLTLKRKFIAVLALTSLLGA) is a signal peptide. C22 carries the N-palmitoyl cysteine lipid modification. C22 carries the S-diacylglycerol cysteine lipid modification.

The protein belongs to the BamB family. In terms of assembly, part of the Bam complex.

It is found in the cell outer membrane. Functionally, part of the outer membrane protein assembly complex, which is involved in assembly and insertion of beta-barrel proteins into the outer membrane. This Taylorella asinigenitalis (strain MCE3) protein is Outer membrane protein assembly factor BamB.